A 317-amino-acid chain; its full sequence is Inositol oxygenase 2 (317 aa).

Substrate is bound by residues Arg-57 and 115 to 117 (DES). Positions 128, 153, and 154 each coordinate Fe cation. Substrate contacts are provided by residues Lys-157 and 174–175 (GD). Residues His-226, His-252, and Asp-285 each contribute to the Fe cation site. Residue 252–253 (HS) coordinates substrate.

It belongs to the myo-inositol oxygenase family. Fe cation serves as cofactor. As to expression, expressed mainly in roots, stems, flowers and siliques. Low expression in leaves.

It is found in the cytoplasm. It catalyses the reaction myo-inositol + O2 = D-glucuronate + H2O + H(+). The protein operates within polyol metabolism; myo-inositol degradation into D-glucuronate; D-glucuronate from myo-inositol: step 1/1. Involved in the biosynthesis of UDP-glucuronic acid (UDP-GlcA), providing nucleotide sugars for cell-wall polymers. May be also involved in plant ascorbate biosynthesis. This is Inositol oxygenase 2 (MIOX2) from Arabidopsis thaliana (Mouse-ear cress).